A 418-amino-acid polypeptide reads, in one-letter code: Serine hydroxymethyltransferase (418 aa).

Residues L121 and 125–127 (GHL) each bind (6S)-5,6,7,8-tetrahydrofolate. N6-(pyridoxal phosphate)lysine is present on K230. (6S)-5,6,7,8-tetrahydrofolate-binding positions include E246 and 355–357 (SPF).

Belongs to the SHMT family. In terms of assembly, homodimer. Requires pyridoxal 5'-phosphate as cofactor.

The protein localises to the cytoplasm. The catalysed reaction is (6R)-5,10-methylene-5,6,7,8-tetrahydrofolate + glycine + H2O = (6S)-5,6,7,8-tetrahydrofolate + L-serine. Its pathway is one-carbon metabolism; tetrahydrofolate interconversion. It functions in the pathway amino-acid biosynthesis; glycine biosynthesis; glycine from L-serine: step 1/1. Its function is as follows. Catalyzes the reversible interconversion of serine and glycine with tetrahydrofolate (THF) serving as the one-carbon carrier. This reaction serves as the major source of one-carbon groups required for the biosynthesis of purines, thymidylate, methionine, and other important biomolecules. Also exhibits THF-independent aldolase activity toward beta-hydroxyamino acids, producing glycine and aldehydes, via a retro-aldol mechanism. This is Serine hydroxymethyltransferase from Streptococcus pneumoniae serotype 4 (strain ATCC BAA-334 / TIGR4).